A 121-amino-acid polypeptide reads, in one-letter code: Small ribosomal subunit protein bS6 (121 aa).

Positions 96–121 (DTGPSSMMKTVEREDARKTQQAEYQA) are disordered. Residues 105–115 (TVEREDARKTQ) show a composition bias toward basic and acidic residues.

Belongs to the bacterial ribosomal protein bS6 family.

Its function is as follows. Binds together with bS18 to 16S ribosomal RNA. In Albidiferax ferrireducens (strain ATCC BAA-621 / DSM 15236 / T118) (Rhodoferax ferrireducens), this protein is Small ribosomal subunit protein bS6.